Reading from the N-terminus, the 792-residue chain is DEAD-box ATP-dependent RNA helicase 40 (792 aa).

Low complexity predominate over residues 1 to 16; the sequence is MSAGTAPAAPRYAPDD. 2 disordered regions span residues 1–25 and 44–118; these read MSAG…PWRG and TQYE…PLPA. In terms of domain architecture, WW spans 17 to 51; it reads PSLPKPWRGLVDGTTGYLYYWNPETNITQYEKPLP. Residues 52–68 show a composition bias toward pro residues; that stretch reads PEDQLPPPPPLPPPPPR. 2 stretches are compositionally biased toward basic and acidic residues: residues 70 to 80 and 88 to 108; these read GRGDRDRDRRD and PRRD…DHRS. The short motif at 150–178 is the Q motif element; the sequence is TSFETGGFPPEILKEIQRAGFSSPTPIQA. The Helicase ATP-binding domain maps to 181 to 355; that stretch reads WPIALQCQDV…EDLLVHPVQV (175 aa). 194–201 lines the ATP pocket; the sequence is AKTGSGKT. The short motif at 303–306 is the DEAD box element; it reads DEAD. Residues 384–528 enclose the Helicase C-terminal domain; that stretch reads RLEQILRSQD…RVPRDLADMA (145 aa). A disordered region spans residues 523–792; the sequence is DLADMASRGG…NATVQNGGDN (270 aa). 2 stretches are compositionally biased toward basic and acidic residues: residues 543-560 and 572-588; these read TRSD…RYGG and DSSR…DGRS. 2 stretches are compositionally biased toward basic residues: residues 589 to 599 and 609 to 654; these read RRSGRGRSRSR and RSPK…RRHE. The span at 668–708 shows a compositional bias: basic and acidic residues; sequence GHGERKRTPEADPSRNHTNHSDPKDDRHPEDGKVGKVDLDR. Over residues 725–739 the composition is skewed to polar residues; it reads GKTSRSVSPGNQVEG. Acidic residues predominate over residues 764-777; the sequence is DEEEGMIDEDGEIA.

Belongs to the DEAD box helicase family. DDX5/DBP2 subfamily.

Its subcellular location is the nucleus. It carries out the reaction ATP + H2O = ADP + phosphate + H(+). Functionally, ATP-dependent RNA helicase involved nonsense-mediated mRNA decay and ribosome biogenesis through rRNA processing. The sequence is that of DEAD-box ATP-dependent RNA helicase 40 from Oryza sativa subsp. japonica (Rice).